We begin with the raw amino-acid sequence, 452 residues long: Bifunctional protein GlmU (452 aa).

A pyrophosphorylase region spans residues 1–224; sequence MNIVILAAGM…VWETHGVNSK (224 aa). UDP-N-acetyl-alpha-D-glucosamine contacts are provided by residues 6 to 9, K20, Q71, 76 to 77, 98 to 100, G135, E149, N164, and N222; these read LAAG, GT, and YGD. D100 contributes to the Mg(2+) binding site. N222 contributes to the Mg(2+) binding site. A linker region spans residues 225-245; that stretch reads VQLAELERVHQNNIARALLEH. The interval 246–452 is N-acetyltransferase; sequence GVTLADPARI…GWQRPVKIKK (207 aa). UDP-N-acetyl-alpha-D-glucosamine-binding residues include R328 and K346. H358 acts as the Proton acceptor in catalysis. Residues Y361 and N372 each coordinate UDP-N-acetyl-alpha-D-glucosamine. Residues A375, 381-382, S400, A418, and R435 contribute to the acetyl-CoA site; that span reads NY.

The protein in the N-terminal section; belongs to the N-acetylglucosamine-1-phosphate uridyltransferase family. In the C-terminal section; belongs to the transferase hexapeptide repeat family. Homotrimer. The cofactor is Mg(2+).

The protein resides in the cytoplasm. It carries out the reaction alpha-D-glucosamine 1-phosphate + acetyl-CoA = N-acetyl-alpha-D-glucosamine 1-phosphate + CoA + H(+). The catalysed reaction is N-acetyl-alpha-D-glucosamine 1-phosphate + UTP + H(+) = UDP-N-acetyl-alpha-D-glucosamine + diphosphate. It functions in the pathway nucleotide-sugar biosynthesis; UDP-N-acetyl-alpha-D-glucosamine biosynthesis; N-acetyl-alpha-D-glucosamine 1-phosphate from alpha-D-glucosamine 6-phosphate (route II): step 2/2. It participates in nucleotide-sugar biosynthesis; UDP-N-acetyl-alpha-D-glucosamine biosynthesis; UDP-N-acetyl-alpha-D-glucosamine from N-acetyl-alpha-D-glucosamine 1-phosphate: step 1/1. Its pathway is bacterial outer membrane biogenesis; LPS lipid A biosynthesis. Catalyzes the last two sequential reactions in the de novo biosynthetic pathway for UDP-N-acetylglucosamine (UDP-GlcNAc). The C-terminal domain catalyzes the transfer of acetyl group from acetyl coenzyme A to glucosamine-1-phosphate (GlcN-1-P) to produce N-acetylglucosamine-1-phosphate (GlcNAc-1-P), which is converted into UDP-GlcNAc by the transfer of uridine 5-monophosphate (from uridine 5-triphosphate), a reaction catalyzed by the N-terminal domain. The protein is Bifunctional protein GlmU of Herminiimonas arsenicoxydans.